The chain runs to 697 residues: Trishanku (697 aa).

Positions 1-94 (MEIEPVVRIS…NNNSNSNGTD (94 aa)) are disordered. A compositionally biased stretch (low complexity) spans 12–47 (NGNNNQNNNNNNNNNTNNNSNNNNNNNNSSNINSTN). The segment covering 58–72 (KMISNINNQKSPNPL) has biased composition (polar residues). Low complexity predominate over residues 73–91 (NSSVDDNNNTNNNNNSNSN). Positions 122–189 (SDVIFKVGDR…ICIGILDLDY (68 aa)) constitute a BTB domain. The interval 311–455 (IQQQQQQQQQ…DSANDDYEYS (145 aa)) is disordered. The span at 312–331 (QQQQQQQQQQLQSANGASGK) shows a compositional bias: low complexity. Residues 332-344 (SHGKRSSSSHLKK) are compositionally biased toward basic residues. The span at 353–363 (GSCSSRCSSRR) shows a compositional bias: low complexity. Residues 416–453 (DDFENDSEDGDDDDEDDDEDDDFTDDDDKDDSANDDYE) show a composition bias toward acidic residues.

In terms of tissue distribution, expressed strongly in presumptive spore (prespore or psp) cells during the late G2 phase of cell cycle. Present at a low level in vegetative cells.

In terms of biological role, required for normal morphogenesis and cell-type stability. The polypeptide is Trishanku (triA) (Dictyostelium discoideum (Social amoeba)).